A 339-amino-acid chain; its full sequence is Heme A synthase (339 aa).

Transmembrane regions (helical) follow at residues 7 to 27 (VIIWLLSGCFLVFIMVVVGGI), 92 to 112 (HRFIGRIIGLVFIIPFIYFLI), 126 to 146 (ILLGMGAFQGFLGWFMVKSGL), 159 to 179 (LHLTFAFITFAYTLWVALDLI), 199 to 219 (AIIILQIIYGGFVAGLNAGLI), 254 to 274 (VQFVHRTIAYFVAGLIVFLTF), 291 to 311 (ALLIIVFIQFTLGVLTLLYSV), and 312 to 332 (PLWLGVIHQAMAFILLATTTY). Residue His-258 participates in heme binding. His-319 contacts heme.

This sequence belongs to the COX15/CtaA family. Type 2 subfamily. Interacts with CtaB. Heme b is required as a cofactor.

It localises to the cell membrane. It catalyses the reaction Fe(II)-heme o + 2 A + H2O = Fe(II)-heme a + 2 AH2. The protein operates within porphyrin-containing compound metabolism; heme A biosynthesis; heme A from heme O: step 1/1. In terms of biological role, catalyzes the conversion of heme O to heme A by two successive hydroxylations of the methyl group at C8. The first hydroxylation forms heme I, the second hydroxylation results in an unstable dihydroxymethyl group, which spontaneously dehydrates, resulting in the formyl group of heme A. The polypeptide is Heme A synthase (Flavobacterium psychrophilum (strain ATCC 49511 / DSM 21280 / CIP 103535 / JIP02/86)).